A 260-amino-acid chain; its full sequence is Ribosomal RNA small subunit methyltransferase J (260 aa).

Residues 101–102, 117–118, 153–154, and Asp176 each bind S-adenosyl-L-methionine; these read RD, ER, and SS.

The protein belongs to the methyltransferase superfamily. RsmJ family.

It is found in the cytoplasm. It catalyses the reaction guanosine(1516) in 16S rRNA + S-adenosyl-L-methionine = N(2)-methylguanosine(1516) in 16S rRNA + S-adenosyl-L-homocysteine + H(+). Specifically methylates the guanosine in position 1516 of 16S rRNA. The protein is Ribosomal RNA small subunit methyltransferase J of Aliivibrio salmonicida (strain LFI1238) (Vibrio salmonicida (strain LFI1238)).